A 289-amino-acid chain; its full sequence is Small ribosomal subunit protein uS2C (289 aa).

It belongs to the universal ribosomal protein uS2 family. In terms of assembly, component of the small ribosomal subunit. Mature ribosomes consist of a small (40S) and a large (60S) subunit. The 40S subunit contains about 33 different proteins and 1 molecule of RNA (18S). The 60S subunit contains about 49 different proteins and 3 molecules of RNA (25S, 5.8S and 5S). Interacts with rps21.

It is found in the cytoplasm. Required for the assembly and/or stability of the 40S ribosomal subunit. Required for the processing of the 20S rRNA-precursor to mature 18S rRNA in a late step of the maturation of 40S ribosomal subunits. This is Small ribosomal subunit protein uS2C (rps0c) from Schizosaccharomyces japonicus (strain yFS275 / FY16936) (Fission yeast).